Reading from the N-terminus, the 551-residue chain is MHDFFLPVIKNALLSLAVSSDKPVLIERPADKKFGDFSTNIAFLIAKESRRNPKEFAGELIAHLSFPPDTIKSMTVAGPGFINFFLTPTFIMQSVEQILLEGKGYGRSCLGKGKKAIVEYVSANPTGPLTIGRGRGGVLGDCIANLLETQSYAVTREYYFNDAGRQMQILGESVRFRYLELCGVAETFPETHYQGAYIREIAESLFAGHGAALQGVHDLLPFIKSAETIIFKSIKNTLERIGIRHDSFFNEHTLYHREGSGQSANEEVIDLLREKQFIGEYDGATWFLTSRIGQEKDKVLIKSSGEPSYRLPDIAYHITKFKRGYDLMVNVFGADHIDEYPDVLEALKILGYDASRIQVAINQFVTTTVDGQSVKMSTRKGNADLLDDLVDDVGPDATRLFFIMRSKDSHLNFDIDLAKKQSKDNPVFYLHYAHARICSLLRMAALENGFDPDGSGHHLLQLLDSEPELRLGLLLLEYPQMITASIRLLEPQKMVDYLHSVAELYHKFYQECPILKAEPDISKARLFLSLATKQVLCNGFRILGISAPESM.

The short motif at 123–133 (ANPTGPLTIGR) is the 'HIGH' region element.

It belongs to the class-I aminoacyl-tRNA synthetase family. Monomer.

It localises to the cytoplasm. The catalysed reaction is tRNA(Arg) + L-arginine + ATP = L-arginyl-tRNA(Arg) + AMP + diphosphate. The protein is Arginine--tRNA ligase of Chlorobium phaeobacteroides (strain DSM 266 / SMG 266 / 2430).